The following is a 393-amino-acid chain: S-adenosylmethionine synthase (393 aa).

Histidine 16 provides a ligand contact to ATP. Aspartate 18 is a binding site for Mg(2+). K(+) is bound at residue glutamate 44. L-methionine contacts are provided by glutamate 57 and glutamine 100. The tract at residues 100–110 (QSQDIAQGVDK) is flexible loop. ATP-binding positions include 167–169 (DAK), 238–239 (RF), aspartate 247, 253–254 (RK), alanine 270, and lysine 274. An L-methionine-binding site is contributed by aspartate 247. Lysine 278 is an L-methionine binding site.

It belongs to the AdoMet synthase family. In terms of assembly, homotetramer; dimer of dimers. Requires Mg(2+) as cofactor. The cofactor is K(+).

The protein localises to the cytoplasm. It catalyses the reaction L-methionine + ATP + H2O = S-adenosyl-L-methionine + phosphate + diphosphate. The protein operates within amino-acid biosynthesis; S-adenosyl-L-methionine biosynthesis; S-adenosyl-L-methionine from L-methionine: step 1/1. Catalyzes the formation of S-adenosylmethionine (AdoMet) from methionine and ATP. The overall synthetic reaction is composed of two sequential steps, AdoMet formation and the subsequent tripolyphosphate hydrolysis which occurs prior to release of AdoMet from the enzyme. The protein is S-adenosylmethionine synthase of Delftia acidovorans (strain DSM 14801 / SPH-1).